A 514-amino-acid polypeptide reads, in one-letter code: Uridylate cyclase (514 aa).

Guanylate cyclase domains lie at 49-190 (VHMY…AKLA) and 286-428 (VSLY…EKRQ). A ribonucleoside 5'-triphosphate-binding positions include Y52, R105, F178, 184 to 188 (NHAAK), and 291 to 296 (DIDGFT). Positions 291, 292, and 339 each coordinate Ca(2+). D291 lines the Mn(2+) pocket. The tract at residues 495–514 (IRADERQVQPHSRQKVDGSR) is disordered. Positions 496–514 (RADERQVQPHSRQKVDGSR) are enriched in basic and acidic residues.

Belongs to the adenylyl cyclase class-4/guanylyl cyclase family. Pyrimidine cyclase subfamily. Monomer. Requires a divalent metal cation as cofactor.

Its subcellular location is the cytoplasm. It carries out the reaction UTP = 3',5'-cyclic UMP + diphosphate. In terms of biological role, pycsar (pyrimidine cyclase system for antiphage resistance) provides immunity against bacteriophage. The pyrimidine cyclase (PycC) synthesizes cyclic nucleotides in response to infection; these serve as specific second messenger signals. The signals activate the adjacent effector, leading to bacterial cell death and abortive phage infection. A clade A Pycsar system. Its function is as follows. The pyrimidine cyclase gene of a two-gene Pycsar system, generates cyclic UMP (cUMP) from UTP, has little to no activity on ATP, CTP or GTP. Expression of this and adjacent effector PaPycTIR (AC P0DV41) probably confers resistance to bacteriophage. The genes are probably only expressed in response to bacteriophage infection. Does not have adenylyl or guanylyl cyclase activity. The protein is Uridylate cyclase of Pseudomonas aeruginosa.